A 328-amino-acid polypeptide reads, in one-letter code: Putative glycosyltransferase 41 (328 aa).

This sequence belongs to the glycosyltransferase group 1 family. Glycosyltransferase 4 subfamily.

In Sulfolobus islandicus filamentous virus (isolate Iceland/Hveragerdi) (SIFV), this protein is Putative glycosyltransferase 41 (SIFV0041).